Here is a 660-residue protein sequence, read N- to C-terminus: Elongation factor 4 (660 aa).

Residues 55–241 form the tr-type G domain; the sequence is AQIRNFCIIA…EVVRQVPPPQ (187 aa). GTP is bound by residues 67–72 and 188–191; these read DHGKST and NKID.

It belongs to the TRAFAC class translation factor GTPase superfamily. Classic translation factor GTPase family. LepA subfamily.

The protein localises to the cell membrane. It catalyses the reaction GTP + H2O = GDP + phosphate + H(+). Its function is as follows. Required for accurate and efficient protein synthesis under certain stress conditions. May act as a fidelity factor of the translation reaction, by catalyzing a one-codon backward translocation of tRNAs on improperly translocated ribosomes. Back-translocation proceeds from a post-translocation (POST) complex to a pre-translocation (PRE) complex, thus giving elongation factor G a second chance to translocate the tRNAs correctly. Binds to ribosomes in a GTP-dependent manner. In Mycolicibacterium paratuberculosis (strain ATCC BAA-968 / K-10) (Mycobacterium paratuberculosis), this protein is Elongation factor 4.